Reading from the N-terminus, the 330-residue chain is Aspartate--ammonia ligase (330 aa).

The protein belongs to the class-II aminoacyl-tRNA synthetase family. AsnA subfamily.

The protein localises to the cytoplasm. It catalyses the reaction L-aspartate + NH4(+) + ATP = L-asparagine + AMP + diphosphate + H(+). It functions in the pathway amino-acid biosynthesis; L-asparagine biosynthesis; L-asparagine from L-aspartate (ammonia route): step 1/1. The chain is Aspartate--ammonia ligase from Streptococcus pneumoniae serotype 2 (strain D39 / NCTC 7466).